The sequence spans 283 residues: S-methyl-5'-thioadenosine phosphorylase (283 aa).

T18 lines the phosphate pocket. Residue K51 is modified to N6-acetyllysine. Phosphate contacts are provided by residues 60 to 61 (RH) and 93 to 94 (TA). M196 lines the substrate pocket. Position 197 (T197) interacts with phosphate. 220–222 (DYD) is a binding site for substrate.

It belongs to the PNP/MTAP phosphorylase family. MTAP subfamily. As to quaternary structure, homotrimer. As to expression, ubiquitously expressed.

It is found in the cytoplasm. Its subcellular location is the nucleus. It catalyses the reaction S-methyl-5'-thioadenosine + phosphate = 5-(methylsulfanyl)-alpha-D-ribose 1-phosphate + adenine. The protein operates within amino-acid biosynthesis; L-methionine biosynthesis via salvage pathway; S-methyl-5-thio-alpha-D-ribose 1-phosphate from S-methyl-5'-thioadenosine (phosphorylase route): step 1/1. Inhibited by 5'-methylthiotubercin and 5'-chloroformycin. Catalyzes the reversible phosphorylation of S-methyl-5'-thioadenosine (MTA) to adenine and 5-methylthioribose-1-phosphate. Involved in the breakdown of MTA, a major by-product of polyamine biosynthesis. Responsible for the first step in the methionine salvage pathway after MTA has been generated from S-adenosylmethionine. Has broad substrate specificity with 6-aminopurine nucleosides as preferred substrates. In Homo sapiens (Human), this protein is S-methyl-5'-thioadenosine phosphorylase.